Reading from the N-terminus, the 505-residue chain is Xylose import ATP-binding protein XylG (505 aa).

ABC transporter domains lie at 6-243 and 262-505; these read LEMR…VGRE and VKNY…TGGK. Residue 38–45 coordinates ATP; that stretch reads GENGAGKS.

The protein belongs to the ABC transporter superfamily. Xylose importer (TC 3.A.1.2.4) family. In terms of assembly, the complex is composed of two ATP-binding proteins (XylG), two transmembrane proteins (XylH) and a solute-binding protein (XylF).

It is found in the cell membrane. The catalysed reaction is D-xylose(out) + ATP + H2O = D-xylose(in) + ADP + phosphate + H(+). Functionally, part of the ABC transporter complex XylFGH involved in xylose import. Responsible for energy coupling to the transport system. This Thermoanaerobacter pseudethanolicus (strain ATCC 33223 / 39E) (Clostridium thermohydrosulfuricum) protein is Xylose import ATP-binding protein XylG.